The following is a 578-amino-acid chain: Arginine--tRNA ligase (578 aa).

The short motif at P127–H137 is the 'HIGH' region element.

The protein belongs to the class-I aminoacyl-tRNA synthetase family. In terms of assembly, monomer.

It is found in the cytoplasm. It carries out the reaction tRNA(Arg) + L-arginine + ATP = L-arginyl-tRNA(Arg) + AMP + diphosphate. In Pseudomonas putida (strain ATCC 47054 / DSM 6125 / CFBP 8728 / NCIMB 11950 / KT2440), this protein is Arginine--tRNA ligase.